The sequence spans 282 residues: Ribosomal RNA small subunit methyltransferase A (282 aa).

S-adenosyl-L-methionine is bound by residues Asn28, Leu30, Gly55, Glu77, Asp103, and Asn123.

The protein belongs to the class I-like SAM-binding methyltransferase superfamily. rRNA adenine N(6)-methyltransferase family. RsmA subfamily.

It is found in the cytoplasm. It carries out the reaction adenosine(1518)/adenosine(1519) in 16S rRNA + 4 S-adenosyl-L-methionine = N(6)-dimethyladenosine(1518)/N(6)-dimethyladenosine(1519) in 16S rRNA + 4 S-adenosyl-L-homocysteine + 4 H(+). Functionally, specifically dimethylates two adjacent adenosines (A1518 and A1519) in the loop of a conserved hairpin near the 3'-end of 16S rRNA in the 30S particle. May play a critical role in biogenesis of 30S subunits. The polypeptide is Ribosomal RNA small subunit methyltransferase A (Afipia carboxidovorans (strain ATCC 49405 / DSM 1227 / KCTC 32145 / OM5) (Oligotropha carboxidovorans)).